Here is a 78-residue protein sequence, read N- to C-terminus: Metallothionein-like protein type 2 (78 aa).

This sequence belongs to the metallothionein superfamily. Type 15 family.

Functionally, metallothioneins have a high content of cysteine residues that bind various heavy metals. The chain is Metallothionein-like protein type 2 from Nicotiana glutinosa (Tobacco).